The sequence spans 760 residues: uncharacterized protein (760 aa).

The N-terminal stretch at Met-1–Ala-23 is a signal peptide. Residue Cys-24 is the site of N-palmitoyl cysteine attachment. A lipid anchor (S-diacylglycerol cysteine) is attached at Cys-24. 2 disordered regions span residues Ala-220–Asn-262 and Tyr-443–Ser-482. Polar residues-rich tracts occupy residues Gly-222–Ala-257 and Pro-448–Gln-472.

Belongs to the MG185/MG260 family.

The protein resides in the cell membrane. This is an uncharacterized protein from Mycoplasma pneumoniae (strain ATCC 29342 / M129 / Subtype 1) (Mycoplasmoides pneumoniae).